The sequence spans 237 residues: Octopine transport system permease protein OccQ (237 aa).

In terms of domain architecture, ABC transmembrane type-1 spans Thr-22–Phe-222. Transmembrane regions (helical) follow at residues Met-26–Ala-46, Leu-72–Phe-92, Gly-96–Ala-116, and Ser-202–Phe-222.

This sequence belongs to the binding-protein-dependent transport system permease family. HisMQ subfamily.

It is found in the cell inner membrane. In terms of biological role, component of the octopine active transport system probably consisting of four subunits: Q, M, P and T. This is Octopine transport system permease protein OccQ (occQ) from Agrobacterium tumefaciens (strain Ach5).